Reading from the N-terminus, the 437-residue chain is Elongation factor 1-alpha (437 aa).

The tr-type G domain maps to 4 to 229 (KPHMNLVVIG…DQLQPPAKPV (226 aa)). Residues 13-20 (GHVDHGKS) are G1. Position 13-20 (13-20 (GHVDHGKS)) interacts with GTP. Serine 20 is a binding site for Mg(2+). The interval 69–73 (GITID) is G2. A G3 region spans residues 90–93 (DAPG). GTP-binding positions include 90–94 (DAPGH) and 152–155 (NKMD). A G4 region spans residues 152–155 (NKMD). A G5 region spans residues 193–195 (SAW).

It belongs to the TRAFAC class translation factor GTPase superfamily. Classic translation factor GTPase family. EF-Tu/EF-1A subfamily.

The protein localises to the cytoplasm. It catalyses the reaction GTP + H2O = GDP + phosphate + H(+). GTP hydrolase that promotes the GTP-dependent binding of aminoacyl-tRNA to the A-site of ribosomes during protein biosynthesis. This chain is Elongation factor 1-alpha, found in Aeropyrum pernix (strain ATCC 700893 / DSM 11879 / JCM 9820 / NBRC 100138 / K1).